A 396-amino-acid chain; its full sequence is Anhydro-N-acetylmuramic acid kinase (396 aa).

Residue 21–28 (GTSADGID) participates in ATP binding.

It belongs to the anhydro-N-acetylmuramic acid kinase family.

It catalyses the reaction 1,6-anhydro-N-acetyl-beta-muramate + ATP + H2O = N-acetyl-D-muramate 6-phosphate + ADP + H(+). Its pathway is amino-sugar metabolism; 1,6-anhydro-N-acetylmuramate degradation. It functions in the pathway cell wall biogenesis; peptidoglycan recycling. Its function is as follows. Catalyzes the specific phosphorylation of 1,6-anhydro-N-acetylmuramic acid (anhMurNAc) with the simultaneous cleavage of the 1,6-anhydro ring, generating MurNAc-6-P. Is required for the utilization of anhMurNAc either imported from the medium or derived from its own cell wall murein, and thus plays a role in cell wall recycling. This Caldanaerobacter subterraneus subsp. tengcongensis (strain DSM 15242 / JCM 11007 / NBRC 100824 / MB4) (Thermoanaerobacter tengcongensis) protein is Anhydro-N-acetylmuramic acid kinase.